The following is a 103-amino-acid chain: Histone H4 (103 aa).

Gly residues predominate over residues methionine 1–glycine 14. The interval methionine 1 to arginine 20 is disordered. N6-acetyl-N6-methyllysine; alternate is present on lysine 6. 3 positions are modified to N6-methyllysine; alternate: lysine 6, lysine 9, and lysine 13. N6-acetyl-N6-methyllysine; alternate is present on lysine 13. The DNA-binding element occupies lysine 17–lysine 21. Lysine 92 is subject to N6-glutaryllysine.

Belongs to the histone H4 family. In terms of assembly, the nucleosome is a histone octamer containing two molecules each of H2A, H2B, H3 and H4 assembled in one H3-H4 heterotetramer and two H2A-H2B heterodimers. The octamer wraps approximately 147 bp of DNA. Glutarylation at Lys-92 (H4K91glu) destabilizes nucleosomes by promoting dissociation of the H2A-H2B dimers from nucleosomes.

It localises to the nucleus. The protein localises to the chromosome. Functionally, core component of nucleosome. Nucleosomes wrap and compact DNA into chromatin, limiting DNA accessibility to the cellular machineries which require DNA as a template. Histones thereby play a central role in transcription regulation, DNA repair, DNA replication and chromosomal stability. DNA accessibility is regulated via a complex set of post-translational modifications of histones, also called histone code, and nucleosome remodeling. This chain is Histone H4 (H4.1), found in Phanerodontia chrysosporium (White-rot fungus).